The sequence spans 421 residues: Periplasmic [Fe] hydrogenase large subunit (421 aa).

4Fe-4S ferredoxin-type domains lie at 26–57 (HFVQIDEAKCIGCDTCSQYCPTAAIFGEMGEP) and 59–86 (SIPHIEACINCGQCLTHCPENAIYEAQS). [4Fe-4S] cluster contacts are provided by Cys-35, Cys-38, Cys-41, Cys-45, Cys-66, Cys-69, Cys-72, Cys-76, Cys-179, Cys-234, Cys-378, and Cys-382. Cys-382 serves as a coordination point for Fe(2+).

Heterodimer of a large and a small subunit. [4Fe-4S] cluster is required as a cofactor. The cofactor is Fe(2+).

It localises to the periplasm. The catalysed reaction is H2 + 2 oxidized [2Fe-2S]-[ferredoxin] = 2 reduced [2Fe-2S]-[ferredoxin] + 2 H(+). In terms of biological role, may be involved in hydrogen uptake for the reduction of sulfate to hydrogen sulfide in an electron transport chain. Cytochrome c3 is likely to be the physiological electron carrier for the enzyme. The protein is Periplasmic [Fe] hydrogenase large subunit (hydA) of Nitratidesulfovibrio vulgaris (strain ATCC 29579 / DSM 644 / CCUG 34227 / NCIMB 8303 / VKM B-1760 / Hildenborough) (Desulfovibrio vulgaris).